We begin with the raw amino-acid sequence, 155 residues long: Ribosomal RNA large subunit methyltransferase H (155 aa).

Residues leucine 73, glycine 104, and 123–128 contribute to the S-adenosyl-L-methionine site; that span reads LSPLTL.

Belongs to the RNA methyltransferase RlmH family. As to quaternary structure, homodimer.

The protein resides in the cytoplasm. It catalyses the reaction pseudouridine(1915) in 23S rRNA + S-adenosyl-L-methionine = N(3)-methylpseudouridine(1915) in 23S rRNA + S-adenosyl-L-homocysteine + H(+). In terms of biological role, specifically methylates the pseudouridine at position 1915 (m3Psi1915) in 23S rRNA. The protein is Ribosomal RNA large subunit methyltransferase H of Pseudomonas fluorescens (strain ATCC BAA-477 / NRRL B-23932 / Pf-5).